Reading from the N-terminus, the 207-residue chain is Ribonuclease HII (207 aa).

The RNase H type-2 domain occupies 20-207 (QLFAGVDEVG…KPVKRVLGIE (188 aa)). The a divalent metal cation site is built by Asp26, Glu27, and Asp118.

This sequence belongs to the RNase HII family. Mn(2+) is required as a cofactor. Mg(2+) serves as cofactor.

It localises to the cytoplasm. The enzyme catalyses Endonucleolytic cleavage to 5'-phosphomonoester.. In terms of biological role, endonuclease that specifically degrades the RNA of RNA-DNA hybrids. The polypeptide is Ribonuclease HII (Aliivibrio salmonicida (strain LFI1238) (Vibrio salmonicida (strain LFI1238))).